The following is a 496-amino-acid chain: Cyclin-dependent kinase 16 (496 aa).

The segment at 1–95 (MDRMKKIKRQ…SATSSDEVQS (95 aa)) is disordered. Residue Ser12 is modified to Phosphoserine; by BRSK2. 7 positions are modified to phosphoserine: Ser36, Ser42, Ser64, Ser65, Ser78, Ser82, and Ser89. The span at 69–78 (IVHEDMKMGS) shows a compositional bias: basic and acidic residues. Positions 83-93 (DQASATSSDEV) are enriched in polar residues. A Phosphoserine; by CDK5 modification is found at Ser95. 6 positions are modified to phosphoserine: Ser110, Ser119, Ser138, Ser146, Ser153, and Ser155. The Protein kinase domain maps to 165–446 (YIKLDKLGEG…AEDARKHPFF (282 aa)). ATP-binding positions include 171–179 (LGEGTYATV) and Lys194. Thr175 is modified (phosphothreonine). Asp286 (proton acceptor) is an active-site residue. A Phosphothreonine modification is found at Thr380. Phosphoserine occurs at positions 391, 478, and 480.

Belongs to the protein kinase superfamily. CMGC Ser/Thr protein kinase family. CDC2/CDKX subfamily. In terms of assembly, found in a complex containing CABLES1, CDK17 and TDRD7. Interacts with BRSK2. Identified in a complex with NSF, syntaxin-1, synaptotagmin, SYN1, SYP and CDK5R1. Interacts with YWHAH, YWHAQ and YWHAZ. Interacts with CCNY; this interaction increases the CDK16 kinase activity. Interacts with CCNYL1; this interaction mutually increases the stability of CDK16 and CCNYL1 and increases the kinase activity of CDK16. Interacts with NSF. Post-translationally, phosphorylation of CDK16 is essential for the binding of CCNY, but also essential for the regulation of CDK16 kinase activity. Phosphorylation of CDK16 is essential for the binding of CCNYl1, but also essential for the regulation of CDK16 kinase activity. Ser-146 and Ser-153 are the critical sites for the binding of CCNYL1 and for modulating CDK16 kinase activity. Phosphorylation at Ser-153 inhibits kinase activity. In terms of tissue distribution, highly expressed in testis and brain, and detected at lower levels in heart, skeletal muscle, adipose tissue, lung, spleen and pancreas (at protein level). Ubiquitous with highest levels in testis and brain, with longer form predominant in all tissues except the testis.

The protein localises to the cytoplasm. It is found in the cytoplasmic vesicle. It localises to the secretory vesicle. Its subcellular location is the cell membrane. The protein resides in the synapse. The protein localises to the synaptosome. It catalyses the reaction L-seryl-[protein] + ATP = O-phospho-L-seryl-[protein] + ADP + H(+). The enzyme catalyses L-threonyl-[protein] + ATP = O-phospho-L-threonyl-[protein] + ADP + H(+). Functionally, protein kinase that plays a role in vesicle-mediated transport processes and exocytosis. Can phosphorylate CCNY at 'Ser-336' (in vitro). Plays a role in the regulation of insulin secretion in response to changes in blood glucose levels. Regulates GH1 release by brain neurons. Phosphorylates NSF, and thereby regulates NSF oligomerization. Required for normal spermatogenesis. Regulates neuron differentiation and dendrite development. In Mus musculus (Mouse), this protein is Cyclin-dependent kinase 16 (Cdk16).